A 197-amino-acid polypeptide reads, in one-letter code: Surfactant protein C (197 aa).

The propeptide occupies 1 to 23; that stretch reads MDVGSKEVLMESPPDYSAAPRGR. S-palmitoyl cysteine attachment occurs at residues C28 and C29. Residues 59–197 constitute a propeptide that is removed on maturation; that stretch reads HMSQKHTEMV…LCGEVPLYYI (139 aa). Positions 94–197 constitute a BRICHOS domain; sequence FSIGSTGLVV…LCGEVPLYYI (104 aa). Intrachain disulfides connect C120–C148 and C121–C189.

It localises to the secreted. The protein resides in the extracellular space. Its subcellular location is the surface film. In terms of biological role, pulmonary surfactant associated proteins promote alveolar stability by lowering the surface tension at the air-liquid interface in the peripheral air spaces. The protein is Surfactant protein C of Homo sapiens (Human).